We begin with the raw amino-acid sequence, 309 residues long: Transcription initiation factor IIB 1 (309 aa).

2 repeat units span residues 125-208 (NELE…LREL) and 219-300 (DYVT…ELTQ).

The protein belongs to the TFIIB family.

Its function is as follows. Stabilizes TBP binding to an archaeal box-A promoter. Also responsible for recruiting RNA polymerase II to the pre-initiation complex (DNA-TBP-TFIIB). The chain is Transcription initiation factor IIB 1 from Saccharolobus solfataricus (strain ATCC 35092 / DSM 1617 / JCM 11322 / P2) (Sulfolobus solfataricus).